The following is a 124-amino-acid chain: MARIAGVDIPKNKRGVIALTYIFGVGRSRAIEVLEKAQVSQDKKVQDWNDDEIGGIREAVSFYKIEGELRSEVSLNIKRLMDIGCYRGIRHRSGLPLRGQRTKNNSRTRKGKRKTVANKKKATK.

Residues 94–124 (GLPLRGQRTKNNSRTRKGKRKTVANKKKATK) form a disordered region. Residues 100-124 (QRTKNNSRTRKGKRKTVANKKKATK) are compositionally biased toward basic residues.

It belongs to the universal ribosomal protein uS13 family. Part of the 30S ribosomal subunit. Forms a loose heterodimer with protein S19. Forms two bridges to the 50S subunit in the 70S ribosome.

Its function is as follows. Located at the top of the head of the 30S subunit, it contacts several helices of the 16S rRNA. In the 70S ribosome it contacts the 23S rRNA (bridge B1a) and protein L5 of the 50S subunit (bridge B1b), connecting the 2 subunits; these bridges are implicated in subunit movement. Contacts the tRNAs in the A and P-sites. In Flavobacterium psychrophilum (strain ATCC 49511 / DSM 21280 / CIP 103535 / JIP02/86), this protein is Small ribosomal subunit protein uS13.